Consider the following 1030-residue polypeptide: Alpha-L-rhamnosidase (1030 aa).

Residues 133–297 (PSLEGSSWIW…GAGPWGRVAP (165 aa)) form a carbohydrate-binding module-67 (CBM67) region. Ca(2+)-binding residues include Asp179 and Asn180. Alpha-L-rhamnose-binding positions include 179 to 180 (DN) and Trp203. Positions 228 and 233 each coordinate Ca(2+). Residues Asp630, 634 to 636 (RDE), Asp643, and Trp695 contribute to the alpha-L-rhamnose site. The active-site Proton donor is Glu636. Residue Glu895 is the Proton acceptor of the active site. His916 contacts alpha-L-rhamnose.

It belongs to the glycosyl hydrolase 78 family.

The enzyme catalyses Hydrolysis of terminal non-reducing alpha-L-rhamnose residues in alpha-L-rhamnosides.. Its function is as follows. Alpha-L-rhamnosidase which is able to degrade p-nitrophenyl-alpha-L-rhamnopyranoside (PNP-Rha) in vitro. Releases L-rhamnose from citrus flavonoids such as naringin, rutin and hesperidin, and the arabinogalactan-protein (AGP) gum arabic. AGPs are a family of proteoglycans that are localized on the cell surfaces of higher plants. Cleaves both the alpha-1,6 and the alpha-1,2-linked rhamnosyl residues. The polypeptide is Alpha-L-rhamnosidase (Streptomyces avermitilis (strain ATCC 31267 / DSM 46492 / JCM 5070 / NBRC 14893 / NCIMB 12804 / NRRL 8165 / MA-4680)).